Reading from the N-terminus, the 247-residue chain is Probable transcriptional regulatory protein GSU1074 (247 aa).

It belongs to the TACO1 family.

Its subcellular location is the cytoplasm. In Geobacter sulfurreducens (strain ATCC 51573 / DSM 12127 / PCA), this protein is Probable transcriptional regulatory protein GSU1074.